Consider the following 476-residue polypeptide: Hyaluronidase-2 (476 aa).

The signal sequence occupies residues 1–20; that stretch reads MWTGLGPAVTLALVLVVAWA. 2 cysteine pairs are disulfide-bonded: C47–C343 and C214–C230. N77 and N106 each carry an N-linked (GlcNAc...) asparagine glycan. E138 acts as the Proton donor in catalysis. N-linked (GlcNAc...) asparagine glycans are attached at residues N340 and N360. The region spanning 364 to 442 is the EGF-like domain; that stretch reads AAQYCSWAQC…YLGWGGEQCQ (79 aa). 3 disulfide bridges follow: C368–C379, C373–C430, and C432–C441. G451 carries GPI-anchor amidated glycine lipidation. Positions 452–476 are cleaved as a propeptide — removed in mature form; it reads ASGAWAGSHLTGLLAVAVLAFTWTS.

The protein belongs to the glycosyl hydrolase 56 family. In terms of assembly, interacts with MST1R. As to quaternary structure, (Microbial infection) Interacts with Jaagsiekte sheep retrovirus (JSRV) envelope proteins.

The protein resides in the cell membrane. The catalysed reaction is Random hydrolysis of (1-&gt;4)-linkages between N-acetyl-beta-D-glucosamine and D-glucuronate residues in hyaluronate.. Its function is as follows. Catalyzes hyaluronan degradation into small fragments that are endocytosed and degraded in lysosomes by HYAL1 and exoglycosidases. Essential for the breakdown of extracellular matrix hyaluronan. This Ovis aries (Sheep) protein is Hyaluronidase-2 (HYAL2).